Reading from the N-terminus, the 490-residue chain is Probable malate:quinone oxidoreductase (490 aa).

It belongs to the MQO family. FAD serves as cofactor.

The enzyme catalyses (S)-malate + a quinone = a quinol + oxaloacetate. It functions in the pathway carbohydrate metabolism; tricarboxylic acid cycle; oxaloacetate from (S)-malate (quinone route): step 1/1. The chain is Probable malate:quinone oxidoreductase from Corynebacterium jeikeium (strain K411).